The primary structure comprises 164 residues: MAASLGQVLALVLVAALWGGTQPLLKRASAGLQRVHEPTWAQQLLQEMKTLFLNTEYLMPFLLNQCGSLLYYLTLASTDLTLAVPICNSLAIIFTLIVGKALGEDIGGKRAVAGMVLTVIGISLCITSSVPWTAELQLHGKGQLQTLSQKCKREASGTQSERFG.

A run of 3 helical transmembrane segments spans residues 1–21 (MAAS…WGGT), 82–102 (LAVP…GKAL), and 112–132 (VAGM…SVPW).

The protein belongs to the TMEM234 family.

The protein resides in the membrane. The sequence is that of Transmembrane protein 234 (TMEM234) from Homo sapiens (Human).